A 291-amino-acid polypeptide reads, in one-letter code: Insulin-like growth factor-binding protein 3 (291 aa).

The N-terminal stretch at 1 to 27 (MLRARPALWAAALTALTLLRGPPAARA) is a signal peptide. The interval 28 to 134 (GAGTMGAGPV…LRPYLLPSAS (107 aa)) is IGF-binding. One can recognise an IGFBP N-terminal domain in the interval 36-119 (PVVRCEPCDA…LDGRGLCANA (84 aa)). Disulfide bonds link cysteine 40-cysteine 69, cysteine 43-cysteine 71, cysteine 51-cysteine 72, cysteine 60-cysteine 75, cysteine 83-cysteine 96, and cysteine 90-cysteine 116. 2 N-linked (GlcNAc...) asparagine glycosylation sites follow: asparagine 118 and asparagine 136. 2 disordered regions span residues 132-162 (SASGNGSESEEDHSMGSTENQAGPSTHRVPV) and 177-211 (KGHAKDSQRYKVDYESQSTDTQNFSSESKRETEYG). The span at 146 to 155 (MGSTENQAGP) shows a compositional bias: polar residues. A Phosphoserine modification is found at serine 148. The segment covering 177–190 (KGHAKDSQRYKVDY) has biased composition (basic and acidic residues). The segment covering 191-202 (ESQSTDTQNFSS) has biased composition (polar residues). N-linked (GlcNAc...) asparagine glycosylation occurs at asparagine 199. At serine 201 the chain carries Phosphoserine. The Thyroglobulin type-1 domain occupies 210 to 285 (YGPCRREMED…DVKGKGDVHC (76 aa)). 3 disulfide bridges follow: cysteine 213–cysteine 240, cysteine 251–cysteine 262, and cysteine 264–cysteine 285.

Interacts with XLKD1. Binds IGF2 more than IGF1. Forms a ternary complex of about 140 to 150 kDa with IGF1 or IGF2 and a 85 kDa glycoprotein (ALS). Interacts with humanin; humanin competes with importin KPNB1 for binding to IGFBP3, blocking IGFBP3 nuclear import and IGFBP3-mediated apoptosis. Interacts with TMEM219. Interacts with RXRA; this interaction modulates the transcriptional activity of RXRA. Interacts with LRP1; this interaction mediates cell growth inhibition independent of IGF1. Phosphorylated by FAM20C in the extracellular medium. Phosphorylated by CK2; resulting in decreased nuclear localization. In terms of tissue distribution, plasma; expressed by most tissues.

Its subcellular location is the secreted. It localises to the nucleus. Functionally, multifunctional protein that plays a critical role in regulating the availability of IGFs such as IGF1 and IGF2 to their receptors and thereby regulates IGF-mediated cellular processes including proliferation, differentiation, and apoptosis in a cell-type specific manner. Also exhibits IGF-independent antiproliferative and apoptotic effects mediated by its receptor TMEM219/IGFBP-3R. Inhibits the positive effect of humanin on insulin sensitivity. Promotes testicular germ cell apoptosis. Acts via LRP-1/alpha2M receptor, also known as TGF-beta type V receptor, to mediate cell growth inhibition independent of IGF1. Mechanistically, induces serine-specific dephosphorylation of IRS1 or IRS2 upon ligation to its receptor, leading to the inhibitory cascade. In the nucleus, interacts with transcription factors such as retinoid X receptor-alpha/RXRA to regulate transcriptional signaling and apoptosis. The polypeptide is Insulin-like growth factor-binding protein 3 (IGFBP3) (Bos taurus (Bovine)).